Consider the following 253-residue polypeptide: Acidic endochitinase pcht28 (253 aa).

Positions 1 to 24 (MKFNIVSPVALSCLFFLFLTGTLA) are cleaved as a signal peptide. The active-site Proton donor is Glu92. A disulfide bridge links Cys212 with Cys244.

The protein belongs to the glycosyl hydrolase 19 family. Chitinase class II subfamily.

Its subcellular location is the secreted. It localises to the extracellular space. It carries out the reaction Random endo-hydrolysis of N-acetyl-beta-D-glucosaminide (1-&gt;4)-beta-linkages in chitin and chitodextrins.. Defense against chitin-containing fungal pathogens. The polypeptide is Acidic endochitinase pcht28 (Solanum chilense (Tomato)).